A 558-amino-acid chain; its full sequence is Glucose-6-phosphate isomerase (558 aa).

At alanine 2 the chain carries N-acetylalanine. Position 12 is an N6-acetyllysine (lysine 12). N6-(2-hydroxyisobutyryl)lysine is present on lysine 34. Residue serine 107 is modified to Phosphoserine. The residue at position 109 (threonine 109) is a Phosphothreonine. The residue at position 142 (lysine 142) is an N6-acetyllysine. A D-glucose 6-phosphate-binding site is contributed by 159-160; sequence GS. A Phosphoserine; by CK2 modification is found at serine 185. A D-glucose 6-phosphate-binding site is contributed by 210–215; the sequence is SKTFTT. Threonine 250 is modified (phosphothreonine). Glutamine 354, glutamate 358, and histidine 389 together coordinate D-glucose 6-phosphate. The active-site Proton donor is the glutamate 358. Histidine 389 is an active-site residue. Lysine 454 is modified (N6-acetyllysine; alternate). An N6-malonyllysine; alternate modification is found at lysine 454. Lysine 454 is subject to N6-succinyllysine; alternate. Residue serine 455 is modified to Phosphoserine. Lysine 519 is a D-glucose 6-phosphate binding site. The active site involves lysine 519.

Belongs to the GPI family. In terms of assembly, homodimer in the catalytically active form, monomer in the secreted form. Post-translationally, phosphorylation at Ser-185 by CK2 has been shown to decrease enzymatic activity and may contribute to secretion by a non-classical secretory pathway. ISGylated.

It is found in the cytoplasm. The protein localises to the secreted. It carries out the reaction alpha-D-glucose 6-phosphate = beta-D-fructose 6-phosphate. It functions in the pathway carbohydrate degradation; glycolysis; D-glyceraldehyde 3-phosphate and glycerone phosphate from D-glucose: step 2/4. In terms of biological role, in the cytoplasm, catalyzes the conversion of glucose-6-phosphate to fructose-6-phosphate, the second step in glycolysis, and the reverse reaction during gluconeogenesis. Besides it's role as a glycolytic enzyme, also acts as a secreted cytokine: acts as an angiogenic factor (AMF) that stimulates endothelial cell motility. Acts as a neurotrophic factor, neuroleukin, for spinal and sensory neurons. It is secreted by lectin-stimulated T-cells and induces immunoglobulin secretion. This is Glucose-6-phosphate isomerase from Sus scrofa (Pig).